Here is a 211-residue protein sequence, read N- to C-terminus: Ribosomal RNA small subunit methyltransferase G (211 aa).

S-adenosyl-L-methionine is bound by residues Gly-74, Leu-79, 125–126, and Arg-140; that span reads AE.

The protein belongs to the methyltransferase superfamily. RNA methyltransferase RsmG family.

Its subcellular location is the cytoplasm. Its function is as follows. Specifically methylates the N7 position of guanine in position 518 of 16S rRNA. This chain is Ribosomal RNA small subunit methyltransferase G, found in Clavibacter sepedonicus (Clavibacter michiganensis subsp. sepedonicus).